The chain runs to 399 residues: Dual-specificity RNA methyltransferase RlmN (399 aa).

Glu122 (proton acceptor) is an active-site residue. One can recognise a Radical SAM core domain in the interval 128 to 371; that stretch reads ETDRGTLCVS…VRTPRGRDIL (244 aa). A disulfide bond links Cys135 and Cys374. [4Fe-4S] cluster contacts are provided by Cys142, Cys146, and Cys149. Residues 200–201, Ser232, 254–256, and Asn331 contribute to the S-adenosyl-L-methionine site; these read GE and SLH. The active-site S-methylcysteine intermediate is the Cys374.

It belongs to the radical SAM superfamily. RlmN family. It depends on [4Fe-4S] cluster as a cofactor.

Its subcellular location is the cytoplasm. It carries out the reaction adenosine(2503) in 23S rRNA + 2 reduced [2Fe-2S]-[ferredoxin] + 2 S-adenosyl-L-methionine = 2-methyladenosine(2503) in 23S rRNA + 5'-deoxyadenosine + L-methionine + 2 oxidized [2Fe-2S]-[ferredoxin] + S-adenosyl-L-homocysteine. The enzyme catalyses adenosine(37) in tRNA + 2 reduced [2Fe-2S]-[ferredoxin] + 2 S-adenosyl-L-methionine = 2-methyladenosine(37) in tRNA + 5'-deoxyadenosine + L-methionine + 2 oxidized [2Fe-2S]-[ferredoxin] + S-adenosyl-L-homocysteine. Its function is as follows. Specifically methylates position 2 of adenine 2503 in 23S rRNA and position 2 of adenine 37 in tRNAs. m2A2503 modification seems to play a crucial role in the proofreading step occurring at the peptidyl transferase center and thus would serve to optimize ribosomal fidelity. The chain is Dual-specificity RNA methyltransferase RlmN from Rhodopseudomonas palustris (strain TIE-1).